The primary structure comprises 274 residues: Urease accessory protein UreD (274 aa).

This sequence belongs to the UreD family. In terms of assembly, ureD, UreF and UreG form a complex that acts as a GTP-hydrolysis-dependent molecular chaperone, activating the urease apoprotein by helping to assemble the nickel containing metallocenter of UreC. The UreE protein probably delivers the nickel.

It is found in the cytoplasm. Required for maturation of urease via the functional incorporation of the urease nickel metallocenter. In Klebsiella pneumoniae subsp. pneumoniae (strain ATCC 700721 / MGH 78578), this protein is Urease accessory protein UreD.